We begin with the raw amino-acid sequence, 189 residues long: Small ribosomal subunit protein uS5 (189 aa).

The region spanning Phe-22–Val-85 is the S5 DRBM domain.

Belongs to the universal ribosomal protein uS5 family. In terms of assembly, part of the 30S ribosomal subunit. Contacts proteins S4 and S8.

Its function is as follows. With S4 and S12 plays an important role in translational accuracy. Located at the back of the 30S subunit body where it stabilizes the conformation of the head with respect to the body. This chain is Small ribosomal subunit protein uS5, found in Allorhizobium ampelinum (strain ATCC BAA-846 / DSM 112012 / S4) (Agrobacterium vitis (strain S4)).